Consider the following 293-residue polypeptide: Short-chain dehydrogenase/reductase PhomF' (293 aa).

2 residues coordinate NADP(+): isoleucine 31 and asparagine 102. Serine 175 functions as the Proton donor in the catalytic mechanism. NADP(+)-binding residues include tyrosine 190, lysine 194, and serine 225. The active-site Proton acceptor is the tyrosine 190. The active-site Lowers pKa of active site Tyr is the lysine 194.

Belongs to the short-chain dehydrogenases/reductases (SDR) family.

In terms of biological role, short-chain dehydrogenase/reductase; part of the gene cluster that mediates the biosynthesis of the phomopsins, a group of hexapeptide mycotoxins which infects lupins and causes lupinosis disease in livestock. The role of phomF' within the phomopsins biosynthesis pathway has still to be determined. The pathway starts with the processing of the precursor phomA by several endopeptidases including kexin proteases as well as the cluster-specific S41 family peptidase phomP1 and the oligopeptidase phomG to produce 10 identical copies of the hexapeptide Tyr-Val-Ile-Pro-Ile-Asp. After being excised from the precursor peptide, the core peptides are cyclized and modified post-translationally by enzymes encoded within the gene cluster. The timing and order of proteolysis of the phomA precursor and PTMs are still unknown. Two tyrosinase-like enzymes, phomQ1 and phomQ2, catalyze the chlorination and hydroxylation of Tyr, respectively. PhomYb, is proposed to be involved in the construction of the macrocyclic structure. The other 4 ustYa family proteins may be involved in PTMs that generate the unique structure of phomopsin A. PhomYa is required for the hydroxylation of C-beta of Tyr. PhomYc, phomYd, and phomYe are responsible for the biosynthesis of 2,3-dehydroisoleucine (dIle), 2,3-dehydroaspartic acid (dAsp), and 3,4-dehydroproline (dPro), respectively. While dIle formation by phomYc is indispensable for the installation of dAsp by phomYd, the order of the other PTMs have not been elucidated yet. Most of the biosynthetic enzymes likely have broad substrate specificity, and thus, there might be a metabolic grid from a precursor to phomopsin A. The enzyme(s) responsible for the biosynthesis of 3,4-dehydrovaline (dVal) have also not been identified yet. Finally, phomM acts as an S-adenosylmethionine-dependent alpha-N-methyltransferase that catalyzes two successive N-methylation reactions, converting N-desmethyl-phomopsin A to phomopsin A and phomopsin A further to an N,N-dimethylated congener called phomopsin E. The chain is Short-chain dehydrogenase/reductase PhomF' from Diaporthe leptostromiformis (Lupinosis disease fungus).